Consider the following 153-residue polypeptide: SsrA-binding protein (153 aa).

Residues 129–153 (KREDMKKKDQSREMAQALRERSKSH) form a disordered region.

The protein belongs to the SmpB family.

It localises to the cytoplasm. Required for rescue of stalled ribosomes mediated by trans-translation. Binds to transfer-messenger RNA (tmRNA), required for stable association of tmRNA with ribosomes. tmRNA and SmpB together mimic tRNA shape, replacing the anticodon stem-loop with SmpB. tmRNA is encoded by the ssrA gene; the 2 termini fold to resemble tRNA(Ala) and it encodes a 'tag peptide', a short internal open reading frame. During trans-translation Ala-aminoacylated tmRNA acts like a tRNA, entering the A-site of stalled ribosomes, displacing the stalled mRNA. The ribosome then switches to translate the ORF on the tmRNA; the nascent peptide is terminated with the 'tag peptide' encoded by the tmRNA and targeted for degradation. The ribosome is freed to recommence translation, which seems to be the essential function of trans-translation. The polypeptide is SsrA-binding protein (Geobacter metallireducens (strain ATCC 53774 / DSM 7210 / GS-15)).